The sequence spans 177 residues: Antigen TpF1 (177 aa).

This sequence belongs to the Dps family. As to quaternary structure, homodecamer; either linked or stabilized by disulfide bonds.

In terms of biological role, may play an important structural role in the outer membrane. In Treponema pallidum (strain Nichols), this protein is Antigen TpF1 (tpf1).